The chain runs to 143 residues: Small ribosomal subunit protein uS12 (143 aa).

Over residues Met-1–Ala-19 the composition is skewed to basic residues. A disordered region spans residues Met-1–Arg-21. A Hydroxyproline modification is found at Pro-62.

Belongs to the universal ribosomal protein uS12 family. In terms of assembly, component of the 40S small ribosomal subunit.

The protein resides in the cytoplasm. It is found in the cytosol. Its subcellular location is the rough endoplasmic reticulum. The polypeptide is Small ribosomal subunit protein uS12 (rps-23) (Brugia malayi (Filarial nematode worm)).